The chain runs to 1443 residues: DNA polymerase III PolC-type (1443 aa).

The region spanning 408–567 (FVIFDIETTG…YDTQALKKVF (160 aa)) is the Exonuclease domain.

Belongs to the DNA polymerase type-C family. PolC subfamily.

The protein resides in the cytoplasm. It carries out the reaction DNA(n) + a 2'-deoxyribonucleoside 5'-triphosphate = DNA(n+1) + diphosphate. Required for replicative DNA synthesis. This DNA polymerase also exhibits 3' to 5' exonuclease activity. This chain is DNA polymerase III PolC-type, found in Mycoplasma pneumoniae (strain ATCC 29342 / M129 / Subtype 1) (Mycoplasmoides pneumoniae).